We begin with the raw amino-acid sequence, 525 residues long: Eukaryotic translation initiation factor 3 subunit L (525 aa).

Residues 1–19 (MYTQADEYDGGDAGYEDDY) show a composition bias toward acidic residues. The disordered stretch occupies residues 1–21 (MYTQADEYDGGDAGYEDDYSG). Residues 296-502 (DAIRCFSSVL…IHIADTKVDR (207 aa)) enclose the PCI domain.

It belongs to the eIF-3 subunit L family. In terms of assembly, component of the eukaryotic translation initiation factor 3 (eIF-3) complex.

The protein localises to the cytoplasm. Component of the eukaryotic translation initiation factor 3 (eIF-3) complex, which is involved in protein synthesis of a specialized repertoire of mRNAs and, together with other initiation factors, stimulates binding of mRNA and methionyl-tRNAi to the 40S ribosome. The eIF-3 complex specifically targets and initiates translation of a subset of mRNAs involved in cell proliferation. This is Eukaryotic translation initiation factor 3 subunit L from Nematostella vectensis (Starlet sea anemone).